The sequence spans 591 residues: ESX-1 secretion system protein EccCb1 (591 aa).

2 FtsK domains span residues 65-259 (LQDV…NETQ) and 359-545 (LTPA…EKQE). ATP contacts are provided by residues 84–91 (GAPQTGKS) and 376–383 (GAAKSGKT).

In terms of assembly, part of the ESX-1 / type VII secretion system (T7SS), which is composed of cytosolic and membrane components. The ESX-1 membrane complex is composed of EccB1, EccCa1, EccCb1, EccD1 and EccE1. Interacts with EccCa1, EspK and the C-terminus of EsxB. Residues 1-261 interact with EsxB and an artificial EsxB-EsxA heterodimer.

The protein resides in the cytoplasm. Its activity is regulated as follows. EsxB binding to the second FtsK domain of EccCb1 causes multimerization; a subsequent unknown step relieves the allosteric inhibition of linker 2 on FtsK domain 1 (in EccCa1 subunit), activating the ATPase activity. Its function is as follows. Part of the ESX-1 specialized secretion system, which delivers several virulence factors to host cells during infection, including the key virulence factors EsxA (ESAT-6) and EsxB (CFP-10). EccCb1 may link the cytosolic components of the system with the membrane components. In Mycobacterium tuberculosis (strain ATCC 25618 / H37Rv), this protein is ESX-1 secretion system protein EccCb1.